The chain runs to 399 residues: NADH-quinone oxidoreductase subunit D 2 (399 aa).

The disordered stretch occupies residues 1 to 20; it reads MIASKESNSAATPATSAPTL. The span at 9–20 shows a compositional bias: low complexity; sequence SAATPATSAPTL.

This sequence belongs to the complex I 49 kDa subunit family. NDH-1 is composed of 14 different subunits. Subunits NuoB, C, D, E, F, and G constitute the peripheral sector of the complex.

It localises to the cell inner membrane. The catalysed reaction is a quinone + NADH + 5 H(+)(in) = a quinol + NAD(+) + 4 H(+)(out). NDH-1 shuttles electrons from NADH, via FMN and iron-sulfur (Fe-S) centers, to quinones in the respiratory chain. The immediate electron acceptor for the enzyme in this species is believed to be ubiquinone. Couples the redox reaction to proton translocation (for every two electrons transferred, four hydrogen ions are translocated across the cytoplasmic membrane), and thus conserves the redox energy in a proton gradient. In Opitutus terrae (strain DSM 11246 / JCM 15787 / PB90-1), this protein is NADH-quinone oxidoreductase subunit D 2.